Here is a 534-residue protein sequence, read N- to C-terminus: EH domain-containing protein 1 (534 aa).

The residue at position 1 (Met1) is an N-acetylmethionine. The Dynamin-type G domain maps to 55-286 (FDNKPMVLLV…DLFKDIQSLP (232 aa)). Residues 65–72 (GQYSTGKT) are G1 motif. 65–72 (GQYSTGKT) provides a ligand contact to ATP. A G2 motif region spans residues 91-92 (EP). Positions 153-156 (DTPG) are G3 motif. A coiled-coil region spans residues 198–227 (DEFSEVIKALKNHEDKIRVVLNKADQIETQ). The G4 motif stretch occupies residues 219–222 (NKAD). Lys220 contributes to the ATP binding site. Position 243 (Ile243) is a region of interest, G5 motif. Trp258 contacts ATP. 2 positions are modified to phosphoserine: Ser355 and Ser456. In terms of domain architecture, EH spans 444–532 (DKPTYDEIFY…PHLVPPSKRR (89 aa)). The EF-hand domain occupies 476-511 (LPNTVLGKIWKLADVDKDGLLDDEEFALANHLIKVK). Positions 489, 491, 493, and 500 each coordinate Ca(2+).

The protein belongs to the TRAFAC class dynamin-like GTPase superfamily. Dynamin/Fzo/YdjA family. EHD subfamily. In terms of assembly, homooligomer, and heterooligomer with EHD2, EHD3 and EHD4, ATP-binding is required for heterooligomerization. Interacts (via EH domain) with MICALL1 (via NPF1 motif); the interaction is direct and recruits EHD1 to membranes. Interacts with RAB35; the interaction is indirect through MICALL1 and recruits EHD1 to membranes. Interacts (via EH domain) with PACSIN2 (via NPF motifs); regulates localization to tubular recycling endosome membranes. Interacts with PACSIN1. Interacts with RAB8A. Interacts with FER1L5 (via second C2 domain). Interacts with MYOF. Interacts with ZFYVE20. Interacts (via EH domain) with RAB11FIP2.

Its subcellular location is the recycling endosome membrane. The protein resides in the early endosome membrane. It is found in the cell membrane. The protein localises to the cell projection. It localises to the cilium membrane. ATP- and membrane-binding protein that controls membrane reorganization/tubulation upon ATP hydrolysis. Acts in early endocytic membrane fusion and membrane trafficking of recycling endosomes. Recruited to endosomal membranes upon nerve growth factor stimulation, indirectly regulates neurite outgrowth. Plays a role in myoblast fusion. Involved in the unidirectional retrograde dendritic transport of endocytosed BACE1 and in efficient sorting of BACE1 to axons implicating a function in neuronal APP processing. Plays a role in the formation of the ciliary vesicle (CV), an early step in cilium biogenesis. Proposed to be required for the fusion of distal appendage vesicles (DAVs) to form the CV by recruiting SNARE complex component SNAP29. Is required for recruitment of transition zone proteins CEP290, RPGRIP1L, TMEM67 and B9D2, and of IFT20 following DAV reorganization before Rab8-dependent ciliary membrane extension. Required for the loss of CCP110 form the mother centriole essential for the maturation of the basal body during ciliogenesis. In Pongo abelii (Sumatran orangutan), this protein is EH domain-containing protein 1.